The primary structure comprises 70 residues: DNA-directed RNA polymerase subunit omega (70 aa).

The protein belongs to the RNA polymerase subunit omega family. As to quaternary structure, the RNAP catalytic core consists of 2 alpha, 1 beta, 1 beta' and 1 omega subunit. When a sigma factor is associated with the core the holoenzyme is formed, which can initiate transcription.

It catalyses the reaction RNA(n) + a ribonucleoside 5'-triphosphate = RNA(n+1) + diphosphate. In terms of biological role, promotes RNA polymerase assembly. Latches the N- and C-terminal regions of the beta' subunit thereby facilitating its interaction with the beta and alpha subunits. The polypeptide is DNA-directed RNA polymerase subunit omega (Pelobacter propionicus (strain DSM 2379 / NBRC 103807 / OttBd1)).